Here is a 248-residue protein sequence, read N- to C-terminus: 4-hydroxy-tetrahydrodipicolinate reductase (248 aa).

Residue 13 to 18 coordinates NAD(+); it reads GITGRL. Residue Arg36 coordinates NADP(+). Residues 84 to 86 and 108 to 111 contribute to the NAD(+) site; these read GTT and AANF. Catalysis depends on His140, which acts as the Proton donor/acceptor. His141 is a binding site for (S)-2,3,4,5-tetrahydrodipicolinate. Lys144 (proton donor) is an active-site residue. 150-151 lines the (S)-2,3,4,5-tetrahydrodipicolinate pocket; that stretch reads GT.

It belongs to the DapB family.

The protein localises to the cytoplasm. The catalysed reaction is (S)-2,3,4,5-tetrahydrodipicolinate + NAD(+) + H2O = (2S,4S)-4-hydroxy-2,3,4,5-tetrahydrodipicolinate + NADH + H(+). It carries out the reaction (S)-2,3,4,5-tetrahydrodipicolinate + NADP(+) + H2O = (2S,4S)-4-hydroxy-2,3,4,5-tetrahydrodipicolinate + NADPH + H(+). The protein operates within amino-acid biosynthesis; L-lysine biosynthesis via DAP pathway; (S)-tetrahydrodipicolinate from L-aspartate: step 4/4. In terms of biological role, catalyzes the conversion of 4-hydroxy-tetrahydrodipicolinate (HTPA) to tetrahydrodipicolinate. In Gluconobacter oxydans (strain 621H) (Gluconobacter suboxydans), this protein is 4-hydroxy-tetrahydrodipicolinate reductase.